Consider the following 339-residue polypeptide: Heat-inducible transcription repressor HrcA (339 aa).

Belongs to the HrcA family.

Functionally, negative regulator of class I heat shock genes (grpE-dnaK-dnaJ and groELS operons). Prevents heat-shock induction of these operons. The polypeptide is Heat-inducible transcription repressor HrcA (Clostridium perfringens (strain 13 / Type A)).